The following is a 278-amino-acid chain: Phosphatidylglycerol--prolipoprotein diacylglyceryl transferase (278 aa).

The next 3 helical transmembrane spans lie at 21–41, 54–74, and 88–108; these read WYGIIIAMGILLGYFIAQASV, IIFWSAIFGFIIARIYFVIFQ, and IWQGGIAIHGGLIGGFVTGII. A 1,2-diacyl-sn-glycero-3-phospho-(1'-sn-glycerol) is bound at residue R136. A run of 3 helical transmembrane segments spans residues 176–196, 202–222, and 234–254; these read QPTFLYESIWDVLGFVILILL, IGDTFCLYLIWYSIGRFFVEG, and IRIAQLMSIILIIIGVVIMIV.

It belongs to the Lgt family.

It is found in the cell membrane. The catalysed reaction is L-cysteinyl-[prolipoprotein] + a 1,2-diacyl-sn-glycero-3-phospho-(1'-sn-glycerol) = an S-1,2-diacyl-sn-glyceryl-L-cysteinyl-[prolipoprotein] + sn-glycerol 1-phosphate + H(+). It functions in the pathway protein modification; lipoprotein biosynthesis (diacylglyceryl transfer). Its function is as follows. Catalyzes the transfer of the diacylglyceryl group from phosphatidylglycerol to the sulfhydryl group of the N-terminal cysteine of a prolipoprotein, the first step in the formation of mature lipoproteins. The sequence is that of Phosphatidylglycerol--prolipoprotein diacylglyceryl transferase from Staphylococcus saprophyticus subsp. saprophyticus (strain ATCC 15305 / DSM 20229 / NCIMB 8711 / NCTC 7292 / S-41).